The primary structure comprises 174 residues: Large ribosomal subunit protein uL10 (174 aa).

This sequence belongs to the universal ribosomal protein uL10 family. In terms of assembly, part of the ribosomal stalk of the 50S ribosomal subunit. The N-terminus interacts with L11 and the large rRNA to form the base of the stalk. The C-terminus forms an elongated spine to which L12 dimers bind in a sequential fashion forming a multimeric L10(L12)X complex.

Forms part of the ribosomal stalk, playing a central role in the interaction of the ribosome with GTP-bound translation factors. This is Large ribosomal subunit protein uL10 from Anaeromyxobacter sp. (strain Fw109-5).